The chain runs to 424 residues: Enolase (424 aa).

Gln165 is a (2R)-2-phosphoglycerate binding site. Glu207 acts as the Proton donor in catalysis. Positions 244, 283, and 310 each coordinate Mg(2+). (2R)-2-phosphoglycerate contacts are provided by Lys335, Arg364, Ser365, and Lys386. Catalysis depends on Lys335, which acts as the Proton acceptor.

It belongs to the enolase family. Mg(2+) serves as cofactor.

The protein resides in the cytoplasm. It localises to the secreted. Its subcellular location is the cell surface. It catalyses the reaction (2R)-2-phosphoglycerate = phosphoenolpyruvate + H2O. The protein operates within carbohydrate degradation; glycolysis; pyruvate from D-glyceraldehyde 3-phosphate: step 4/5. Its function is as follows. Catalyzes the reversible conversion of 2-phosphoglycerate (2-PG) into phosphoenolpyruvate (PEP). It is essential for the degradation of carbohydrates via glycolysis. This is Enolase from Chlamydia muridarum (strain MoPn / Nigg).